We begin with the raw amino-acid sequence, 1488 residues long: Putative E3 ubiquitin-protein ligase LIN (1488 aa).

Disordered stretches follow at residues 297-330 (GFSMTTRRSNDGLNETTRENIASNSNHSKGEQSS), 351-414 (YDAS…PLRR), and 432-500 (IVSD…SSSS). Residues 366-380 (EPKKNIKDEDVEPKV) show a composition bias toward basic and acidic residues. Residues 382 to 411 (RSNQKNQMNSPNISPMESPRRASNYSSTNP) show a composition bias toward polar residues. The segment covering 432–444 (IVSDHSLSSSPDT) has biased composition (low complexity). Positions 468-486 (SQTPSMNQDNENSLVLNDS) are enriched in polar residues. The U-box domain occupies 512 to 587 (KPPKDFVCPI…VSWKEQNPEL (76 aa)). 4 WD repeats span residues 1207-1244 (SSNGEVLSLHYLNGQVLSGHADGTIKVWDARKRIPRVI), 1249-1290 (EHKK…DVYD), 1412-1451 (SLSTGLDVHRVAINSDFIFAGTKFGTIEVWLKDKFTRVAS), and 1456-1488 (GGNTKITSLASDADGMMLFVGSSDGKIQVWALD).

Expressed in roots and nodules.

It catalyses the reaction S-ubiquitinyl-[E2 ubiquitin-conjugating enzyme]-L-cysteine + [acceptor protein]-L-lysine = [E2 ubiquitin-conjugating enzyme]-L-cysteine + N(6)-ubiquitinyl-[acceptor protein]-L-lysine.. It participates in protein modification; protein ubiquitination. Putative E3 ubiquitin ligase involved in the rhizobial infection process. Plays an important role in the early steps of bacterial symbiont thread formation in roots, and in growth, differentiation and maintenance of nodules. The chain is Putative E3 ubiquitin-protein ligase LIN from Medicago truncatula (Barrel medic).